A 197-amino-acid chain; its full sequence is RING-H2 finger protein ATL80 (197 aa).

Residues 30–50 (LVVILAALLCALICVLGLIAV) form a helical membrane-spanning segment. The segment at 111 to 153 (CAICLAEFSAGDELRVLPQCGHGFHVACIDTWLGSHSSCPSCR) adopts an RING-type; atypical zinc-finger fold. Residues 168-197 (PGSSSSGLESEPEIEIRIKQGEDDPNSFLP) form a disordered region.

The protein belongs to the RING-type zinc finger family. ATL subfamily.

The protein localises to the membrane. The catalysed reaction is S-ubiquitinyl-[E2 ubiquitin-conjugating enzyme]-L-cysteine + [acceptor protein]-L-lysine = [E2 ubiquitin-conjugating enzyme]-L-cysteine + N(6)-ubiquitinyl-[acceptor protein]-L-lysine.. Its pathway is protein modification; protein ubiquitination. May be involved in the early steps of the plant defense signaling pathway. This is RING-H2 finger protein ATL80 (ATL80) from Arabidopsis thaliana (Mouse-ear cress).